Here is a 665-residue protein sequence, read N- to C-terminus: Auxin response factor 1 (665 aa).

The segment at residues 124-226 is a DNA-binding region (TF-B3); sequence FCKTLTASDT…ELRVGVRRHM (103 aa). Disordered stretches follow at residues 356–408, 496–542, and 645–665; these read VANS…SVPL, PVPS…RQIR, and KADAEENGNTEGRSSSMAGSR. Composition is skewed to polar residues over residues 497–519, 530–542, and 651–665; these read VPSNEFDSGQQSEPLNINQSDIP, LRSPQESQSRQIR, and NGNTEGRSSSMAGSR. Residues 542–635 enclose the PB1 domain; sequence RSCTKVHMQG…EVKKLSPKNK (94 aa).

The protein belongs to the ARF family. In terms of assembly, homodimers and heterodimers. Interacts with the auxin-responsive proteins IAA12, IAA13, IAA17 and with ARF2. Binds to RIN13 in the nucleus. As to expression, expressed in the whole plant.

The protein resides in the nucleus. It localises to the cytoplasm. Its function is as follows. Auxin response factors (ARFs) are transcriptional factors that bind specifically to the DNA sequence 5'-TGTCTC-3' found in the auxin-responsive promoter elements (AuxREs). Seems to act as transcriptional repressor. Formation of heterodimers with Aux/IAA proteins may alter their ability to modulate early auxin response genes expression. Promotes flowering, stamen development, floral organ abscission and fruit dehiscence. Acts as a repressor of IAA2, IAA3 and IAA7. Together with RIN13, promotes leaf senescence and cell death. This Arabidopsis thaliana (Mouse-ear cress) protein is Auxin response factor 1.